Here is a 132-residue protein sequence, read N- to C-terminus: Small ribosomal subunit protein uS13 (132 aa).

A disordered region spans residues 106–132 (PVRGQVTQKNARTRKGPRKTVAGKKGK). The segment covering 116-132 (ARTRKGPRKTVAGKKGK) has biased composition (basic residues).

It belongs to the universal ribosomal protein uS13 family. Part of the 30S ribosomal subunit. Forms a loose heterodimer with protein S19. Forms two bridges to the 50S subunit in the 70S ribosome.

Located at the top of the head of the 30S subunit, it contacts several helices of the 16S rRNA. In the 70S ribosome it contacts the 23S rRNA (bridge B1a) and protein L5 of the 50S subunit (bridge B1b), connecting the 2 subunits; these bridges are implicated in subunit movement. Contacts the tRNAs in the A and P-sites. This Mycoplasmopsis pulmonis (strain UAB CTIP) (Mycoplasma pulmonis) protein is Small ribosomal subunit protein uS13.